The sequence spans 219 residues: GPI ethanolamine phosphate transferase, stabilizing subunit (219 aa).

The next 6 helical transmembrane spans lie at 11–31 (YTNL…SFFV), 42–62 (TWLC…YLVV), 86–106 (CFLM…APLI), 113–133 (FLFA…LLGP), 155–175 (LQIT…PIPL), and 189–209 (TLGA…WIYW).

This sequence belongs to the PIGF family. Part of the ethanolamine phosphate transferase 3 complex composed by PIGO and PIGF. Part of the ethanolamine phosphate transferase 2 complex with PIGG. PIGF is required to stabilize PIGG and PIGO.

Its subcellular location is the endoplasmic reticulum membrane. The protein operates within glycolipid biosynthesis; glycosylphosphatidylinositol-anchor biosynthesis. In terms of biological role, stabilizing subunit of the ethanolamine phosphate transferase 3 and ethanolamine phosphate transferase 2 complexes that sequentially transfer an ethanolamine phosphate (EtNP) from a phosphatidylethanolamine (PE) to the 6-OH position of the third alpha-1,2-linked mannose and the second alpha-1,6-linked mannose of the alpha-D-Man-(1-&gt;2)-alpha-D-Man-(1-&gt;6)-2-PEtn-alpha-D-Man-(1-&gt;4)-alpha-D-GlcN-(1-&gt;6)-(1-radyl,2-acyl-sn-glycero-3-phospho)-2-acyl-inositol (also termed H6) intermediate to generate a 6-PEtn-alpha-D-Man-(1-&gt;2)-6-PEtn-alpha-D-Man-(1-&gt;6)-2-PEtn-alpha-D-Man-(1-&gt;4)-alpha-D-GlcN-(1-&gt;6)-(1-radyl,2-acyl-sn-glycero-3-phospho)-2-acyl-inositol (also termed H8). Participates in the tenth and eleventh steps of the glycosylphosphatidylinositol-anchor biosynthesis, in association with PIGO and PIGG, respectively. The polypeptide is GPI ethanolamine phosphate transferase, stabilizing subunit (Mus musculus (Mouse)).